The following is a 102-amino-acid chain: Co-chaperonin GroES (102 aa).

It belongs to the GroES chaperonin family. As to quaternary structure, heptamer of 7 subunits arranged in a ring. Interacts with the chaperonin GroEL.

The protein localises to the cytoplasm. Its function is as follows. Together with the chaperonin GroEL, plays an essential role in assisting protein folding. The GroEL-GroES system forms a nano-cage that allows encapsulation of the non-native substrate proteins and provides a physical environment optimized to promote and accelerate protein folding. GroES binds to the apical surface of the GroEL ring, thereby capping the opening of the GroEL channel. The sequence is that of Co-chaperonin GroES from Streptomyces coelicolor (strain ATCC BAA-471 / A3(2) / M145).